The sequence spans 383 residues: Envelope glycoprotein D (383 aa).

A signal peptide spans 1–30; sequence MPAATMATPGYLACRTSVATLLFFVLLRRA. Over 31 to 358 the chain is Virion surface; the sequence is AILGAGGAPS…PKVVGPTVGP (328 aa). Intrachain disulfides connect cysteine 76-cysteine 197, cysteine 115-cysteine 212, and cysteine 127-cysteine 136. Residues 244 to 311 are profusion; sequence YQDKLKVASP…TSASGVIEIE (68 aa). Residues 315-349 are disordered; sequence ESDVRLVSYPPPTLPSPGPGGNENGAGYSDNRPDP. Residues 323–332 show a composition bias toward pro residues; the sequence is YPPPTLPSPG. A helical transmembrane segment spans residues 359–379; sequence GAIILVVMCAPILIGLTAFTI. Topologically, residues 380 to 383 are intravirion; the sequence is RKYC.

It belongs to the herpesviridae glycoprotein D family.

It is found in the virion membrane. Its function is as follows. Envelope glycoprotein that binds to host cell entry receptors, promoting the virus entry into host cells. May trigger fusion with host membrane, by recruiting the fusion machinery composed of gB and gH/gL. This Amazona oratrix (yellow-headed parrot) protein is Envelope glycoprotein D (US6).